Reading from the N-terminus, the 816-residue chain is Protein NEL (816 aa).

Positions 1-21 are cleaved as a signal peptide; sequence MESGCGLGTLCLLLCLGPVVG. N-linked (GlcNAc...) asparagine glycosylation is found at Asn53, Asn225, Asn293, and Asn298. The 164-residue stretch at 65–228 folds into the Laminin G-like domain; that stretch reads RSVKASPETA…SQCPDLNRTC (164 aa). The region spanning 272 to 331 is the VWFC 1 domain; that stretch reads RTCTMKGMTYREFESWTDGCKNCTCMNGTVQCEALICSLSDCPPNSALSYVDGKCCKECQ. The 43-residue stretch at 397-439 folds into the EGF-like 1 domain; that stretch reads GHDFCTEGHNCMEHSVCRNLDDRAVCSCRDGFRALREDNAYCE. 18 cysteine pairs are disulfide-bonded: Cys401–Cys413, Cys407–Cys422, Cys424–Cys438, Cys444–Cys457, Cys451–Cys466, Cys468–Cys480, Cys486–Cys499, Cys493–Cys508, Cys510–Cys521, Cys525–Cys535, Cys529–Cys541, Cys543–Cys552, Cys559–Cys572, Cys566–Cys581, Cys583–Cys600, Cys606–Cys619, Cys613–Cys628, and Cys630–Cys636. The 42-residue stretch at 440 to 481 folds into the EGF-like 2; calcium-binding domain; the sequence is DVDECAEGQHYCRENTMCVNTPGSFMCICKTGYIRIDDYSCT. Residues 482–522 form the EGF-like 3; calcium-binding domain; sequence EHDECVTNQHNCDENALCFNTVGGHNCVCKLGYTGNGTVCK. Asn517 is a glycosylation site (N-linked (GlcNAc...) asparagine). The region spanning 523–553 is the EGF-like 4 domain; the sequence is AFCKDGCRNGGACIASNVCACPQGFTGPSCE. The EGF-like 5; calcium-binding domain occupies 555–601; sequence DIDECSDGFVQCDSRANCINLPGWYHCECRDGYHDNGMFSPSGESCE. The 36-residue stretch at 602-637 folds into the EGF-like 6; calcium-binding domain; the sequence is DIDECATGRHSCANDTVCFNLDGGYDCRCPHGKNCT. N-linked (GlcNAc...) asparagine glycans are attached at residues Asn615 and Asn635. 2 consecutive VWFC domains span residues 638 to 693 and 698 to 756; these read GDCI…PECD and SQCL…PRCV.

In terms of tissue distribution, strongly expressed in early embryonic neural tissues (brain, spinal cord, dorsal root ganglia); less in other tissues such as cells around cartilage, myocardium, lung mesenchymal cells, and liver. After hatching expression is restricted to neural tissues including retina.

The sequence is that of Protein NEL (NEL) from Gallus gallus (Chicken).